We begin with the raw amino-acid sequence, 509 residues long: Transcription factor atf-7 (509 aa).

Over residues 283–303 the composition is skewed to polar residues; the sequence is TVSSYHSPLGASSQPPSTQKS. 2 disordered regions span residues 283–318 and 337–400; these read TVSSYHSPLGASSQPPSTQKSPADGSWDHINGEKQI and NMSS…ILER. Residues 308 to 318 show a composition bias toward basic and acidic residues; the sequence is SWDHINGEKQI. Over residues 337-364 the composition is skewed to low complexity; the sequence is NMSSSGSDQDQSADMSNAGSTASTSTGN. Basic and acidic residues predominate over residues 390–400; it reads PDERRNTILER. Residues 391–464 enclose the bZIP domain; it reads DERRNTILER…TERESRCVCL (74 aa). The segment at 393 to 413 is basic motif; that stretch reads RRNTILERNKAAAVRYRKRKK. The segment at 419–450 is leucine-zipper; the sequence is MMGRVQAMEAEKNQLLAIQTQNQVLRRELERV.

Belongs to the bZIP family. Interacts with serine/threonine kinase pmk-1; perhaps in a manner dependent on dual specificity protein kinase sek-1. In terms of tissue distribution, expressed in intestinal cells.

The protein resides in the nucleus. Its subcellular location is the chromosome. Functionally, transcription factor which regulates the transcription of various genes, including those involved in innate immunity and oxidative stress responses. Binds to promoter regions of genes, probably at 5'-[GACGTCA]-3' consensus sequences. Together with transcription factor daf-19, involved in regulation of the serotonergic response of ADF neurons to pathogenic food. Modulates response to infection by the Gram-negative bacterium P.aeruginosa, acting downstream of the p38 signal transduction pathway effector serine/threonine kinase pmk-1. May act with transcription factor elt-2 to control p38 gene induction in response to bacterial infection. May be phosphorylated by pmk-1. Regulates transcription of the metallothionein gene, mtl-1, perhaps acting downstream of pmk-1. The protein is Transcription factor atf-7 of Caenorhabditis elegans.